Here is a 394-residue protein sequence, read N- to C-terminus: ATP phosphoribosyltransferase regulatory subunit (394 aa).

It belongs to the class-II aminoacyl-tRNA synthetase family. HisZ subfamily. As to quaternary structure, heteromultimer composed of HisG and HisZ subunits.

It localises to the cytoplasm. It functions in the pathway amino-acid biosynthesis; L-histidine biosynthesis; L-histidine from 5-phospho-alpha-D-ribose 1-diphosphate: step 1/9. Required for the first step of histidine biosynthesis. May allow the feedback regulation of ATP phosphoribosyltransferase activity by histidine. In Pseudomonas aeruginosa (strain LESB58), this protein is ATP phosphoribosyltransferase regulatory subunit.